Consider the following 88-residue polypeptide: LYR motif-containing protein 2 (88 aa).

The N-terminal 19 residues, 1–19 (MATSRLPPATLTLKQFMRR), are a transit peptide targeting the mitochondrion.

It belongs to the complex I LYR family.

It localises to the mitochondrion. Its function is as follows. Involved in efficient integration of the N-module into mitochondrial respiratory chain complex I. This is LYR motif-containing protein 2 (LYRM2) from Bos taurus (Bovine).